Consider the following 657-residue polypeptide: Pyoverdine export ATP-binding/permease protein PvdT (657 aa).

Residues 6–245 (IDLRNIRKSY…LSANAGALQA (240 aa)) form the ABC transporter domain. 43–50 (GASGSGKS) is an ATP binding site. Transmembrane regions (helical) follow at residues 285–305 (ALTL…LAVG), 532–552 (LSLM…IGVM), 590–610 (LSVV…GILI), and 620–640 (LAAV…FGFM).

This sequence belongs to the ABC transporter superfamily. Macrolide exporter (TC 3.A.1.122) family. Part of the tripartite efflux system PvdRT-OpmQ, which is composed of an inner membrane component with both ATPase and permease domains, PvdT, a periplasmic membrane fusion protein, PvdR, and an outer membrane component, OpmQ.

It localises to the cell inner membrane. Functionally, part of the tripartite efflux system PvdRT-OpmQ required for the secretion into the extracellular milieu of the siderophore pyoverdine (PVD), which is involved in iron acquisition. This subunit binds PVD and drives its secretion by hydrolyzing ATP. The system is responsible for export of newly synthesized PVD after the final steps of biosynthesis have taken place in the periplasm. It is also responsible for recycling of PVD after internalization of ferri-PVD into the periplasm by the outer-membrane receptor FpvA and release of iron from PVD, thus making PVD available for new cycles of iron uptake. The polypeptide is Pyoverdine export ATP-binding/permease protein PvdT (Pseudomonas fluorescens (strain ATCC BAA-477 / NRRL B-23932 / Pf-5)).